The chain runs to 856 residues: V-type proton ATPase subunit a (856 aa).

Over 1–409 (MAPKQDTPFR…NAYGTATYQE (409 aa)) the chain is Cytoplasmic. The helical transmembrane segment at 410–428 (VNPAIPVIVTFPFLFAVMF) threads the bilayer. At 429–430 (GD) the chain is on the vacuolar side. A helical membrane pass occupies residues 431 to 447 (FGHALIMLCAALAMIYW). The Cytoplasmic portion of the chain corresponds to 448-460 (EKPLKKVTFELFA). The chain crosses the membrane as a helical span at residues 461–490 (MVFYGRYIVLVMAVFSVYTGLIYNDVFSKS). Topologically, residues 491-544 (MTLFDSQWKWVVPENFKEGMTVKAVLREPNGYRYPFGLDWRWHGTENELLFINS) are vacuolar. The chain crosses the membrane as a helical span at residues 545 to 564 (YKMKMAIILGWAHMTYSLCF). The Cytoplasmic segment spans residues 565-582 (SYINARHFKRPIDIWGNF). A helical membrane pass occupies residues 583 to 603 (VPGMIFFQSIFGYLVLCIIYK). Over 604 to 648 (WSVDWFGTGRQPPGLLNMLIYMFLQPGTLDGGVELYPGQATVQVI) the chain is Vacuolar. Residues 649–668 (LLLLAVIQVPILLFLKPFYL) form a helical membrane-spanning segment. Residues 669-738 (RWENNRARAK…EVMIHQVIHT (70 aa)) are Cytoplasmic-facing. The segment at 689–710 (VSALDEDDEEDPSNGDDYEGAA) is disordered. Acidic residues predominate over residues 692–707 (LDEDDEEDPSNGDDYE). A helical membrane pass occupies residues 739 to 763 (IEFCLNSVSHTASYLRLWALSLAHQ). At 764–784 (QLSAVLWSMTMAKALESKGLG) the chain is on the vacuolar side. Residues 785–823 (GAIFLVVAFAMFFVLSVIILIIMEGVSAMLHSLRLAWVE) form a helical membrane-spanning segment. Residues 824 to 856 (SFSKFAEFGGWPFTPFSFKQQLEESEELKEYIG) are Cytoplasmic-facing.

It belongs to the V-ATPase 116 kDa subunit family. In terms of assembly, V-ATPase is a heteromultimeric enzyme composed of a peripheral catalytic V1 complex (components A to H) attached to an integral membrane V0 proton pore complex (components: a, c, c', c'', d, e, f and VOA1).

It is found in the vacuole membrane. Subunit of the V0 complex of vacuolar(H+)-ATPase (V-ATPase), a multisubunit enzyme composed of a peripheral complex (V1) that hydrolyzes ATP and a membrane integral complex (V0) that translocates protons. V-ATPase is responsible for acidifying and maintaining the pH of intracellular compartments. This Neurospora crassa (strain ATCC 24698 / 74-OR23-1A / CBS 708.71 / DSM 1257 / FGSC 987) protein is V-type proton ATPase subunit a (vph-1).